A 150-amino-acid polypeptide reads, in one-letter code: Ribonuclease K6 (150 aa).

An N-terminal signal peptide occupies residues 1–23 (MVLCFPLLLLLLVLWGPVCLLHA). H38 serves as the catalytic Proton acceptor. Disulfide bonds link C46/C104, C60/C114, C78/C129, and C85/C92. N55 is a glycosylation site (N-linked (GlcNAc...) asparagine). Substrate contacts are provided by residues 61-65 (KHQNT) and K86. N-linked (GlcNAc...) asparagine glycosylation occurs at N100. Residue R105 participates in substrate binding. H145 acts as the Proton donor in catalysis.

It belongs to the pancreatic ribonuclease family. As to quaternary structure, interacts (via N-terminus) with bacterial lipopolysaccharide (LPS).

The protein localises to the secreted. The protein resides in the lysosome. It is found in the cytoplasmic granule. Functionally, ribonuclease which shows a preference for the pyrimidines uridine and cytosine. Has potent antibacterial activity against a range of Gram-positive and Gram-negative bacteria, including P.aeruginosa, A.baumanii, M.luteus, S.aureus, E.faecalis, E.faecium, S.saprophyticus and E.coli. Causes loss of bacterial membrane integrity, and also promotes agglutination of Gram-negative bacteria. Probably contributes to urinary tract sterility. Bactericidal activity is independent of RNase activity. In Macaca mulatta (Rhesus macaque), this protein is Ribonuclease K6 (RNASE6).